Reading from the N-terminus, the 281-residue chain is Probable endonuclease 4 (281 aa).

The Zn(2+) site is built by His69, His109, Glu145, Asp179, His182, His216, Asp229, His231, and Glu261.

This sequence belongs to the AP endonuclease 2 family. Requires Zn(2+) as cofactor.

It catalyses the reaction Endonucleolytic cleavage to 5'-phosphooligonucleotide end-products.. Functionally, endonuclease IV plays a role in DNA repair. It cleaves phosphodiester bonds at apurinic or apyrimidinic (AP) sites, generating a 3'-hydroxyl group and a 5'-terminal sugar phosphate. The chain is Probable endonuclease 4 from Pectobacterium atrosepticum (strain SCRI 1043 / ATCC BAA-672) (Erwinia carotovora subsp. atroseptica).